The primary structure comprises 425 residues: Serine--tRNA ligase (425 aa).

230-232 (TAE) contacts L-serine. 261–263 (RSE) contacts ATP. Glu-284 is an L-serine binding site. 348–351 (EISS) contacts ATP. L-serine is bound at residue Ser-384.

Belongs to the class-II aminoacyl-tRNA synthetase family. Type-1 seryl-tRNA synthetase subfamily. As to quaternary structure, homodimer. The tRNA molecule binds across the dimer.

It localises to the cytoplasm. It catalyses the reaction tRNA(Ser) + L-serine + ATP = L-seryl-tRNA(Ser) + AMP + diphosphate + H(+). The enzyme catalyses tRNA(Sec) + L-serine + ATP = L-seryl-tRNA(Sec) + AMP + diphosphate + H(+). The protein operates within aminoacyl-tRNA biosynthesis; selenocysteinyl-tRNA(Sec) biosynthesis; L-seryl-tRNA(Sec) from L-serine and tRNA(Sec): step 1/1. Its function is as follows. Catalyzes the attachment of serine to tRNA(Ser). Is also able to aminoacylate tRNA(Sec) with serine, to form the misacylated tRNA L-seryl-tRNA(Sec), which will be further converted into selenocysteinyl-tRNA(Sec). This is Serine--tRNA ligase from Streptococcus gordonii (strain Challis / ATCC 35105 / BCRC 15272 / CH1 / DL1 / V288).